We begin with the raw amino-acid sequence, 454 residues long: DNA repair protein RadA (454 aa).

The segment at 11–28 (CTECGTHSPKWLGQCSGC) adopts a C4-type zinc-finger fold. ATP is bound at residue 94–101 (GEPGIGKS). The RadA KNRFG motif motif lies at 251–255 (KNRFG). A lon-protease-like region spans residues 350–454 (DVFLSIAGGL…TIKDAVRLLQ (105 aa)).

The protein belongs to the RecA family. RadA subfamily.

DNA-dependent ATPase involved in processing of recombination intermediates, plays a role in repairing DNA breaks. Stimulates the branch migration of RecA-mediated strand transfer reactions, allowing the 3' invading strand to extend heteroduplex DNA faster. Binds ssDNA in the presence of ADP but not other nucleotides, has ATPase activity that is stimulated by ssDNA and various branched DNA structures, but inhibited by SSB. Does not have RecA's homology-searching function. This Chlamydia trachomatis serovar D (strain ATCC VR-885 / DSM 19411 / UW-3/Cx) protein is DNA repair protein RadA.